Here is a 177-residue protein sequence, read N- to C-terminus: Large ribosomal subunit protein uL6 (177 aa).

It belongs to the universal ribosomal protein uL6 family. Part of the 50S ribosomal subunit.

This protein binds to the 23S rRNA, and is important in its secondary structure. It is located near the subunit interface in the base of the L7/L12 stalk, and near the tRNA binding site of the peptidyltransferase center. This Acinetobacter baumannii (strain SDF) protein is Large ribosomal subunit protein uL6.